Consider the following 1053-residue polypeptide: CRISPR-associated endonuclease Cas9 (1053 aa).

Residues 1-41 form a ruvC-I region; the sequence is MKRNYILGLDIGITSVGYGIIDYETRDVIDAGVRLFKEANV. The For RuvC-like nuclease domain role is filled by Asp10. Asp10 is a binding site for Mg(2+). The recognition lobe stretch occupies residues 41 to 426; sequence VENNEGRRSK…IFNRLKLVPK (386 aa). Residues 435 to 481 form a ruvC-II region; that stretch reads EIPTTLVDDFILSPVVKRSFIQSIKVINAIIKKYGLPNDIIIELARE. Residues Glu477 and Glu481 each coordinate Mg(2+). The 167-residue stretch at 480–646 folds into the HNH Cas9-type domain; it reads REKNSKDAQK…VQKDFINRNL (167 aa). His557 (proton acceptor for HNH nuclease domain) is an active-site residue. Positions 650 to 775 are ruvC-III; sequence RYATRGLMNL…FKDYKYSHRV (126 aa). Mg(2+) is bound at residue His701. Tyr789 serves as a coordination point for RNA. PAM substrate-binding regions lie at residues 882–889 and 985–993; these read YYGNKLNA and NNDLLNRIE. The tract at residues 910-1053 is PAM-interacting domain (PI); the sequence is KPYRFDVYLD…KKHPQIIKKG (144 aa).

It belongs to the CRISPR-associated Cas9 family. Subtype II-A subfamily. In terms of assembly, monomer. Binds crRNA and tracrRNA. It depends on Mg(2+) as a cofactor.

Its function is as follows. CRISPR (clustered regularly interspaced short palindromic repeat) is an adaptive immune system that provides protection against mobile genetic elements (viruses, transposable elements and conjugative plasmids). CRISPR clusters contain spacers, sequences complementary to antecedent mobile elements, and target invading nucleic acids. CRISPR clusters are transcribed and processed into CRISPR RNA (crRNA). In type II CRISPR systems correct processing of pre-crRNA requires a trans-encoded small RNA (tracrRNA), endogenous ribonuclease 3 (rnc) and this protein. The tracrRNA serves as a guide for ribonuclease 3-aided processing of pre-crRNA. Subsequently Cas9/crRNA/tracrRNA endonucleolytically cleaves linear or circular dsDNA target complementary to the spacer; Cas9 is inactive in the absence of the 2 guide RNAs (gRNA). Cas9 recognizes the protospacer adjacent motif (PAM) in the CRISPR repeat sequences to help distinguish self versus nonself, as targets within the bacterial CRISPR locus do not have PAMs. PAM recognition is also required for catalytic activity. This Staphylococcus aureus protein is CRISPR-associated endonuclease Cas9.